Reading from the N-terminus, the 370-residue chain is tRNA/tmRNA (uracil-C(5))-methyltransferase (370 aa).

S-adenosyl-L-methionine-binding residues include glutamine 195, tyrosine 221, asparagine 226, glutamate 242, and aspartate 302. Cysteine 327 serves as the catalytic Nucleophile. Glutamate 361 functions as the Proton acceptor in the catalytic mechanism.

Belongs to the class I-like SAM-binding methyltransferase superfamily. RNA M5U methyltransferase family. TrmA subfamily.

It catalyses the reaction uridine(54) in tRNA + S-adenosyl-L-methionine = 5-methyluridine(54) in tRNA + S-adenosyl-L-homocysteine + H(+). The catalysed reaction is uridine(341) in tmRNA + S-adenosyl-L-methionine = 5-methyluridine(341) in tmRNA + S-adenosyl-L-homocysteine + H(+). Its function is as follows. Dual-specificity methyltransferase that catalyzes the formation of 5-methyluridine at position 54 (m5U54) in all tRNAs, and that of position 341 (m5U341) in tmRNA (transfer-mRNA). This chain is tRNA/tmRNA (uracil-C(5))-methyltransferase, found in Wolinella succinogenes (strain ATCC 29543 / DSM 1740 / CCUG 13145 / JCM 31913 / LMG 7466 / NCTC 11488 / FDC 602W) (Vibrio succinogenes).